Consider the following 142-residue polypeptide: Putative pre-16S rRNA nuclease (142 aa).

Belongs to the YqgF nuclease family.

Its subcellular location is the cytoplasm. Its function is as follows. Could be a nuclease involved in processing of the 5'-end of pre-16S rRNA. In Desulfitobacterium hafniense (strain DSM 10664 / DCB-2), this protein is Putative pre-16S rRNA nuclease.